The primary structure comprises 169 residues: Ferric-chelate reductase (NAD(P)H) (169 aa).

Y7 is a binding site for NADP(+). FMN-binding positions include 27–31 (QIANT), 45–52 (CLNKENDT), 82–84 (RKS), and K89. NADP(+) is bound by residues H126 and 147-154 (YADYHLMK).

Belongs to the non-flavoprotein flavin reductase family. As to quaternary structure, homodimer. FMN is required as a cofactor. The cofactor is FAD.

It catalyses the reaction 2 a Fe(II)-siderophore + NAD(+) + H(+) = 2 a Fe(III)-siderophore + NADH. The enzyme catalyses 2 a Fe(II)-siderophore + NADP(+) + H(+) = 2 a Fe(III)-siderophore + NADPH. Functionally, catalyzes the reduction of bound ferric iron (Fe(3+)) in a variety of iron chelators (siderophores) using NAD(P)H as the electron donor, resulting in the release of Fe(2+). Not active with uncomplexed Fe(3+). Also reduces FMN and FAD, but not riboflavin. This is Ferric-chelate reductase (NAD(P)H) from Archaeoglobus fulgidus (strain ATCC 49558 / DSM 4304 / JCM 9628 / NBRC 100126 / VC-16).